The following is a 511-amino-acid chain: NAD(P)H-quinone oxidoreductase subunit 2, chloroplastic (511 aa).

The next 14 membrane-spanning stretches (helical) occupy residues 15-35 (LLPE…DLTF), 39-59 (VLSW…VVLL), 78-98 (SLSI…ILLS), 108-128 (ALTE…LLSG), 132-152 (LIMI…LTGY), 167-187 (LLIG…LYGL), 210-230 (FASW…VAAA), 244-264 (PTPV…ALAT), 278-298 (WHLL…LIAI), 306-326 (MLGY…IAGN), 334-354 (LVYM…IILF), 377-397 (VFCF…AGFF), 410-430 (GFYI…YYYL), and 466-486 (LGIG…NPII).

Belongs to the complex I subunit 2 family. NDH is composed of at least 16 different subunits, 5 of which are encoded in the nucleus.

Its subcellular location is the plastid. The protein resides in the chloroplast thylakoid membrane. The catalysed reaction is a plastoquinone + NADH + (n+1) H(+)(in) = a plastoquinol + NAD(+) + n H(+)(out). It carries out the reaction a plastoquinone + NADPH + (n+1) H(+)(in) = a plastoquinol + NADP(+) + n H(+)(out). In terms of biological role, NDH shuttles electrons from NAD(P)H:plastoquinone, via FMN and iron-sulfur (Fe-S) centers, to quinones in the photosynthetic chain and possibly in a chloroplast respiratory chain. The immediate electron acceptor for the enzyme in this species is believed to be plastoquinone. Couples the redox reaction to proton translocation, and thus conserves the redox energy in a proton gradient. The chain is NAD(P)H-quinone oxidoreductase subunit 2, chloroplastic from Chlorokybus atmophyticus (Soil alga).